Consider the following 124-residue polypeptide: Darcynin homolog (124 aa).

Belongs to the darcynin family.

The sequence is that of Darcynin homolog from Granulibacter bethesdensis (strain ATCC BAA-1260 / CGDNIH1).